The sequence spans 329 residues: Aurora kinase B (329 aa).

Residues M1–L14 are compositionally biased toward basic residues. A disordered region spans residues M1–V21. A Protein kinase domain is found at F53 to V305. ATP is bound by residues L59–V67 and K82. The Proton acceptor role is filled by D178.

It belongs to the protein kinase superfamily. Ser/Thr protein kinase family. Aurora subfamily. Interacts with Incenp and Cdc37. Requires Mg(2+) as cofactor.

It localises to the chromosome. Its subcellular location is the cytoplasm. It is found in the cytoskeleton. The protein localises to the midbody. The enzyme catalyses L-seryl-[protein] + ATP = O-phospho-L-seryl-[protein] + ADP + H(+). It catalyses the reaction L-threonyl-[protein] + ATP = O-phospho-L-threonyl-[protein] + ADP + H(+). Serine/threonine-protein kinase that mediates both meiotic and mitotic chromosome segregation. Required for histone H3 'Ser-10' phosphorylation. Phosphorylates mei-S332 within residues 124-126 and stabilizes its association with centromeres during meiosis. May regulate the function of the ESCRT-III complex core component shrb during abscission of germline cells in oogenesis. The chain is Aurora kinase B from Drosophila melanogaster (Fruit fly).